A 679-amino-acid polypeptide reads, in one-letter code: Protein hook (679 aa).

The interval 1-155 (MSAPKNEMYY…NIMRALQELE (155 aa)) is interaction with microtubules. The Calponin-homology (CH) domain maps to 6–123 (NEMYYSLLEW…RLLQLVLGCA (118 aa)). 2 coiled-coil regions span residues 135–437 (EIMC…LKCG) and 480–574 (QTAL…QEIL).

This sequence belongs to the hook family. In terms of assembly, homodimer. Interacts with microtubules via its N-terminus.

It is found in the cytoplasm. It localises to the cytoskeleton. Its subcellular location is the endosome. The protein resides in the synapse. Functionally, involved in endocytic trafficking by stabilizing organelles of the endocytic pathway. Probably acts as a cytoskeletal linker protein required to tether endosome vesicles to the cytoskeleton. Involved in modulation of endocytosis at stages required for down-regulation of membrane proteins that control synapse size. Not involved in synaptic vesicle recycling. Required in R7 cells for boss endocytosis into multivesicular bodies (MVBs). Has a role in regulating adult longevity. In Drosophila melanogaster (Fruit fly), this protein is Protein hook.